We begin with the raw amino-acid sequence, 126 residues long: Protein ApaG (126 aa).

The ApaG domain occupies 2-126 (SDPRYQIDVS…FRLAVPGALH (125 aa)).

The polypeptide is Protein ApaG (Pseudomonas entomophila (strain L48)).